The primary structure comprises 242 residues: Biosynthetic peptidoglycan transglycosylase (242 aa).

A helical membrane pass occupies residues 19-39 (ILAALAVFWGGGIALFSVVPV).

The protein belongs to the glycosyltransferase 51 family.

It is found in the cell inner membrane. The catalysed reaction is [GlcNAc-(1-&gt;4)-Mur2Ac(oyl-L-Ala-gamma-D-Glu-L-Lys-D-Ala-D-Ala)](n)-di-trans,octa-cis-undecaprenyl diphosphate + beta-D-GlcNAc-(1-&gt;4)-Mur2Ac(oyl-L-Ala-gamma-D-Glu-L-Lys-D-Ala-D-Ala)-di-trans,octa-cis-undecaprenyl diphosphate = [GlcNAc-(1-&gt;4)-Mur2Ac(oyl-L-Ala-gamma-D-Glu-L-Lys-D-Ala-D-Ala)](n+1)-di-trans,octa-cis-undecaprenyl diphosphate + di-trans,octa-cis-undecaprenyl diphosphate + H(+). It participates in cell wall biogenesis; peptidoglycan biosynthesis. Functionally, peptidoglycan polymerase that catalyzes glycan chain elongation from lipid-linked precursors. The chain is Biosynthetic peptidoglycan transglycosylase from Salmonella typhi.